The chain runs to 127 residues: Small ribosomal subunit protein uS13 (127 aa).

Residues 93–127 are disordered; sequence RQGLPVRGQRTRTNGRTRRGRRVTVAGKKKAPAKK. The span at 101–127 shows a compositional bias: basic residues; that stretch reads QRTRTNGRTRRGRRVTVAGKKKAPAKK.

The protein belongs to the universal ribosomal protein uS13 family. In terms of assembly, part of the 30S ribosomal subunit. Forms a loose heterodimer with protein S19. Forms two bridges to the 50S subunit in the 70S ribosome.

In terms of biological role, located at the top of the head of the 30S subunit, it contacts several helices of the 16S rRNA. In the 70S ribosome it contacts the 23S rRNA (bridge B1a) and protein L5 of the 50S subunit (bridge B1b), connecting the 2 subunits; these bridges are implicated in subunit movement. Contacts the tRNAs in the A and P-sites. This is Small ribosomal subunit protein uS13 from Crocosphaera subtropica (strain ATCC 51142 / BH68) (Cyanothece sp. (strain ATCC 51142)).